Consider the following 274-residue polypeptide: MAVDDLKVKPMKDQPDQKSNGKKPKGLRFLSSPWWCPAAVALGVLCLGSLMTIIMLGMQLLQVSDLLKQQQANLTLQENILEGQVLAQQQAEAASQESQRELKEMIETLAKRLDEKSKKQMELNHQYLNLQEALKRMDNFSGPCPEDWLWHGKNCYLFSSGSFNWESSQEKCLSLDAQLLKINSTEDLGFIQQATSHSSFPFWMGLSRRKPDYSWLWEDGSPLMPHLFRFQGAVSQRYPSGTCAYIQKGNVFAENCILVAYSICQKKANLLRSE.

Positions Met1 to Asp16 are enriched in basic and acidic residues. Residues Met1–Lys25 form a disordered region. Over Met1 to Ser31 the chain is Cytoplasmic. The chain crosses the membrane as a helical; Signal-anchor for type II membrane protein span at residues Ser32–Ile54. 2 S-palmitoyl cysteine lipidation sites follow: Cys36 and Cys46. The neck stretch occupies residues Met55–Trp150. At Met55–Glu274 the chain is on the extracellular side. N-linked (GlcNAc...) asparagine glycosylation is found at Asn73 and Asn139. Residues Gln84–Asn139 are a coiled coil. Disulfide bonds link Cys144-Cys155, Cys172-Cys264, and Cys243-Cys256. Residues His151–Gln265 enclose the C-type lectin domain.

Homodimer; disulfide-linked. May form a hexamer composed of 3 homodimers. Interacts with HSP70. Post-translationally, N-glycosylated.

It localises to the cell membrane. The protein resides in the membrane raft. Its subcellular location is the secreted. Its function is as follows. Receptor that mediates the recognition, internalization and degradation of oxidatively modified low density lipoprotein (oxLDL) by vascular endothelial cells. OxLDL is a marker of atherosclerosis that induces vascular endothelial cell activation and dysfunction, resulting in pro-inflammatory responses, pro-oxidative conditions and apoptosis. Its association with oxLDL induces the activation of NF-kappa-B through an increased production of intracellular reactive oxygen and a variety of pro-atherogenic cellular responses including a reduction of nitric oxide (NO) release, monocyte adhesion and apoptosis. In addition to binding oxLDL, it acts as a receptor for the HSP70 protein involved in antigen cross-presentation to naive T-cells in dendritic cells, thereby participating in cell-mediated antigen cross-presentation. Also involved in inflammatory process, by acting as a leukocyte-adhesion molecule at the vascular interface in endotoxin-induced inflammation. Also acts as a receptor for advanced glycation end (AGE) products, activated platelets, monocytes, apoptotic cells and both Gram-negative and Gram-positive bacteria. The protein is Oxidized low-density lipoprotein receptor 1 (OLR1) of Oryctolagus cuniculus (Rabbit).